Consider the following 252-residue polypeptide: 3-dehydroquinate dehydratase (252 aa).

3-dehydroquinate is bound by residues serine 21, 46–48 (EWR), and arginine 82. Histidine 143 (proton donor/acceptor) is an active-site residue. Residue lysine 170 is the Schiff-base intermediate with substrate of the active site. Arginine 213, serine 232, and glutamine 236 together coordinate 3-dehydroquinate.

The protein belongs to the type-I 3-dehydroquinase family. In terms of assembly, homodimer.

The enzyme catalyses 3-dehydroquinate = 3-dehydroshikimate + H2O. It functions in the pathway metabolic intermediate biosynthesis; chorismate biosynthesis; chorismate from D-erythrose 4-phosphate and phosphoenolpyruvate: step 3/7. Involved in the third step of the chorismate pathway, which leads to the biosynthesis of aromatic amino acids. Catalyzes the cis-dehydration of 3-dehydroquinate (DHQ) and introduces the first double bond of the aromatic ring to yield 3-dehydroshikimate. This chain is 3-dehydroquinate dehydratase, found in Shigella boydii serotype 4 (strain Sb227).